We begin with the raw amino-acid sequence, 419 residues long: Mitogen-activated protein kinase pmk-2 (419 aa).

Residues 49–350 enclose the Protein kinase domain; it reads YNSLKPLGEG…VSSALRHDYL (302 aa). Residues 55–63 and Lys-78 each bind ATP; that span reads LGEGAYGVV. Residue Asp-210 is the Proton acceptor of the active site. Thr-222 is modified (phosphothreonine). Positions 222 to 224 match the TXY motif; sequence TGY. Phosphotyrosine is present on Tyr-224.

This sequence belongs to the protein kinase superfamily. CMGC Ser/Thr protein kinase family. MAP kinase subfamily. Mg(2+) serves as cofactor. Post-translationally, dually phosphorylated on Thr-222 and Tyr-224, which activates the enzyme.

It is found in the cytoplasm. The catalysed reaction is L-seryl-[protein] + ATP = O-phospho-L-seryl-[protein] + ADP + H(+). It carries out the reaction L-threonyl-[protein] + ATP = O-phospho-L-threonyl-[protein] + ADP + H(+). With respect to regulation, activated by phosphorylation on threonine and tyrosine. Inhibited by pyridinyl-imidazole related compounds. Functionally, responds to activation by environmental stress and pro-inflammatory cytokines by phosphorylating downstream targets. The polypeptide is Mitogen-activated protein kinase pmk-2 (pmk-2) (Caenorhabditis elegans).